Reading from the N-terminus, the 447-residue chain is tRNA-2-methylthio-N(6)-dimethylallyladenosine synthase (447 aa).

Positions 3–120 (KKLYIKTNGC…LPALLNERLE (118 aa)) constitute an MTTase N-terminal domain. Positions 12, 49, 83, 157, 161, and 164 each coordinate [4Fe-4S] cluster. In terms of domain architecture, Radical SAM core spans 143–375 (RAEGPTAFVS…QNRLLMNAAR (233 aa)). The 64-residue stretch at 378–441 (ESMIGSKQKI…PNSLRGRLLE (64 aa)) folds into the TRAM domain.

This sequence belongs to the methylthiotransferase family. MiaB subfamily. As to quaternary structure, monomer. Requires [4Fe-4S] cluster as cofactor.

It is found in the cytoplasm. The enzyme catalyses N(6)-dimethylallyladenosine(37) in tRNA + (sulfur carrier)-SH + AH2 + 2 S-adenosyl-L-methionine = 2-methylsulfanyl-N(6)-dimethylallyladenosine(37) in tRNA + (sulfur carrier)-H + 5'-deoxyadenosine + L-methionine + A + S-adenosyl-L-homocysteine + 2 H(+). Its function is as follows. Catalyzes the methylthiolation of N6-(dimethylallyl)adenosine (i(6)A), leading to the formation of 2-methylthio-N6-(dimethylallyl)adenosine (ms(2)i(6)A) at position 37 in tRNAs that read codons beginning with uridine. In Legionella pneumophila (strain Paris), this protein is tRNA-2-methylthio-N(6)-dimethylallyladenosine synthase.